Here is a 376-residue protein sequence, read N- to C-terminus: MKILIDENMPYAAELFSELGEVIAKSGRTLTADDLIDVDALMIRSVTKVNSELLSKANKLSFVGTATAGMDHVNQALLKNKGVFFTAAPGCNKVGVAEYVLSCVMVLAQQHGFSIFDKTFGIIGAGQVGSYLAQCLDALSIPYLLNDPIKEQEGDTRSFVSLDELLEKSDVISLHTPITRDGNFPTHHLIGQERLLTLRHDQILINAARGPVVDNDALKNRLLIQDGFKAVLDVFEFEPEVDIALLPLLSFATPHIAGYGLEGKARGTTMIFNSFCEFLQREERADPQNLLPVAPIPNVTLNQQWDHSTLHNLIQLVYDVRKDDAVFRKEISTIGAFDNMRKDYWDRREYSAITITGNKDCGLTPLKQLGFTIEEV.

Ser45 and Thr67 together coordinate substrate. Residues 127-128 (QV), Asp147, and Thr176 contribute to the NAD(+) site. Arg209 is a catalytic residue. Asp233 contacts NAD(+). Glu238 is a catalytic residue. Catalysis depends on His255, which acts as the Proton donor. Residue Gly258 participates in NAD(+) binding. Position 259 (Tyr259) interacts with substrate.

This sequence belongs to the D-isomer specific 2-hydroxyacid dehydrogenase family. PdxB subfamily. Homodimer.

Its subcellular location is the cytoplasm. It carries out the reaction 4-phospho-D-erythronate + NAD(+) = (R)-3-hydroxy-2-oxo-4-phosphooxybutanoate + NADH + H(+). The protein operates within cofactor biosynthesis; pyridoxine 5'-phosphate biosynthesis; pyridoxine 5'-phosphate from D-erythrose 4-phosphate: step 2/5. Its function is as follows. Catalyzes the oxidation of erythronate-4-phosphate to 3-hydroxy-2-oxo-4-phosphonooxybutanoate. The polypeptide is Erythronate-4-phosphate dehydrogenase (Aliivibrio salmonicida (strain LFI1238) (Vibrio salmonicida (strain LFI1238))).